Consider the following 493-residue polypeptide: Involucrin (493 aa).

3 disordered regions span residues 1–47 (MSQQ…CQKV), 60–123 (EEKH…GQLE), and 139–493 (KRDE…GQHE). The span at 76 to 89 (EQQQPQEQELQQQH) shows a compositional bias: low complexity. 5 stretches are compositionally biased toward basic and acidic residues: residues 90–116 (WEQD…REKQ), 139–151 (KRDE…KEQL), 161–174 (QLKH…HLEL), 184–193 (NLEHQEKPLE), and 201–213 (QLKH…KPLE). Over residues 228–240 (QEGQSELPEQQRG) the composition is skewed to polar residues. Basic and acidic residues-rich tracts occupy residues 250–270 (GQLK…HEEG), 282–360 (KHLE…HEGQ), 372–386 (KHLE…HPEQ), 411–431 (KHLE…EQLK), and 439–450 (QLKDLEQQERQL). Over residues 473 to 493 (GEVLLPVEQQQQKQEVQGQHE) the composition is skewed to low complexity.

The protein belongs to the involucrin family. In terms of assembly, directly or indirectly cross-linked to cornifelin (CNFN). In terms of processing, substrate of transglutaminase. Specific glutamines or lysines are cross-linked to keratins, desmoplakin and to inter involucrin molecules. Keratinocytes of epidermis and other stratified squamous epithelia.

The protein localises to the cytoplasm. Functionally, part of the insoluble cornified cell envelope (CE) of stratified squamous epithelia. The chain is Involucrin (IVL) from Saguinus oedipus (Cotton-top tamarin).